Reading from the N-terminus, the 62-residue chain is Overexpressed in colon carcinoma 1 protein homolog (62 aa).

Over residues Met1 to Ala16 the composition is skewed to gly residues. Residues Met1–Asp62 are disordered.

It belongs to the OCC1 family.

This chain is Overexpressed in colon carcinoma 1 protein homolog, found in Gallus gallus (Chicken).